A 79-amino-acid polypeptide reads, in one-letter code: Protein S100-G (79 aa).

Ser2 is modified (N-acetylserine). 2 consecutive EF-hand domains span residues 13–48 (IFEK…KGPN) and 45–79 (KGPN…KISQ). Positions 26 and 31 each coordinate Ca(2+). Position 42 is a phosphoserine (Ser42). The Ca(2+) site is built by Asp58, Asn60, Asp62, Glu64, and Glu69.

The protein belongs to the S-100 family.

The sequence is that of Protein S100-G (S100G) from Homo sapiens (Human).